Consider the following 254-residue polypeptide: MEIDLNADLGEGCGSDEALLDLVTSANIACGWHAGGANAMRDCVRWAVQKGVSIGAHPSFHDPENFGRKEMQLPPGDIYAGVLYQLGALSAIAQAEGGRIAHVKPHGALYNQAARDPTIADAVVSAIHDFDPSLSVFGLANSVFVAAARHAGLVAIEEVFADRGYRADGTLVPRSQPGALIDDEDAVLARTLDMVRERQVRAVTGEWVPLNAQTVCLHGDGPHALAFAKRIRAALETAGIDVIAPGALQAGEDA.

Belongs to the LamB/PxpA family. As to quaternary structure, forms a complex composed of PxpA, PxpB and PxpC.

The enzyme catalyses 5-oxo-L-proline + ATP + 2 H2O = L-glutamate + ADP + phosphate + H(+). Its function is as follows. Catalyzes the cleavage of 5-oxoproline to form L-glutamate coupled to the hydrolysis of ATP to ADP and inorganic phosphate. This is 5-oxoprolinase subunit A from Burkholderia vietnamiensis (strain G4 / LMG 22486) (Burkholderia cepacia (strain R1808)).